A 320-amino-acid chain; its full sequence is Ferrochelatase (320 aa).

Residues His194 and Glu272 each coordinate Fe cation.

This sequence belongs to the ferrochelatase family.

It localises to the cytoplasm. It carries out the reaction heme b + 2 H(+) = protoporphyrin IX + Fe(2+). The protein operates within porphyrin-containing compound metabolism; protoheme biosynthesis; protoheme from protoporphyrin-IX: step 1/1. Catalyzes the ferrous insertion into protoporphyrin IX. The polypeptide is Ferrochelatase (Desulfotalea psychrophila (strain LSv54 / DSM 12343)).